Here is a 344-residue protein sequence, read N- to C-terminus: NADH-ubiquinone oxidoreductase chain 1 (344 aa).

A run of 10 helical transmembrane segments spans residues 18–38, 58–78, 89–109, 123–143, 159–179, 195–215, 228–248, 253–273, 281–301, and 316–336; these read FIIILLFIKSLSYIIPLIIAI, PNIVGIFGLLQPIADGLKLLL, IFIFIIAPILTFFLALCAWAI, IGILYLLAISSLGVYGIIISG, AAQIISYEVSIGLIIINVLLC, IWYIFPLFPLFLMFFISSLAE, AELVAGYNVEYSAMGFALFFL, NIILISAVSTILFLAGWLPPF, IPNSIWFGFKTIIILVLFIWV, and LGWKIFLPLSLAWLMLTSGIL.

Belongs to the complex I subunit 1 family.

Its subcellular location is the mitochondrion inner membrane. It carries out the reaction a ubiquinone + NADH + 5 H(+)(in) = a ubiquinol + NAD(+) + 4 H(+)(out). In terms of biological role, core subunit of the mitochondrial membrane respiratory chain NADH dehydrogenase (Complex I) that is believed to belong to the minimal assembly required for catalysis. Complex I functions in the transfer of electrons from NADH to the respiratory chain. The immediate electron acceptor for the enzyme is believed to be ubiquinone. This Cyanidium caldarium (Red alga) protein is NADH-ubiquinone oxidoreductase chain 1 (ND1).